The sequence spans 189 residues: GTPase HRas (189 aa).

M1 is subject to N-acetylmethionine; in GTPase HRas; alternate. T2 carries the post-translational modification N-acetylthreonine; in GTPase HRas, N-terminally processed. Residues 13-18, 29-35, 59-60, 116-119, and 145-147 contribute to the GTP site; these read GVGKSA, VDEYDPT, AG, NKCD, and SAK. The Effector region motif lies at 32–40; sequence YDPTIEDSY. (Microbial infection) O-linked (Glc) threonine; by P.sordellii toxin TcsL glycosylation occurs at T35. An S-nitrosocysteine modification is found at C118. The tract at residues 166–185 is hypervariable region; that stretch reads HKLRKLNPPDESGPGCMSCK. K170 is covalently cross-linked (Glycyl lysine isopeptide (Lys-Gly) (interchain with G-Cter in ubiquitin)). The S-palmitoyl cysteine moiety is linked to residue C181. C184 is lipidated: S-(15-deoxy-Delta12,14-prostaglandin J2-9-yl)cysteine; alternate. C184 carries the S-palmitoyl cysteine; alternate lipid modification. The residue at position 186 (C186) is a Cysteine methyl ester. C186 carries S-farnesyl cysteine lipidation. The propeptide at 187 to 189 is removed in mature form; sequence VLS.

Belongs to the small GTPase superfamily. Ras family. In its GTP-bound form interacts with PLCE1. Interacts with TBC1D10C. Interacts with RGL3. Interacts with HSPD1. Found in a complex with at least BRAF, HRAS, MAP2K1, MAPK3 and RGS14. Interacts (active GTP-bound form) with RGS14 (via RBD 1 domain). Forms a signaling complex with RASGRP1 and DGKZ. Interacts with RASSF5. Interacts with PDE6D. Interacts with IKZF3. Interacts with RACK1. Interacts with PIK3CG; the interaction is required for membrane recruitment and beta-gamma G protein dimer-dependent activation of the PI3K gamma complex PIK3CG:PIK3R6. Interacts with RAPGEF2. Interacts (active GTP-bound form) with both SHOC2 and PP1c (all isoforms) to form a tertiary complex; SHOC2 and PP1c preferably bind M-Ras/MRAS, but they also bind K-Ras/KRAS, N-Ras/NRAS and H-Ras/HRAS. Interacts (GTP-bound form) with MAPKAP1/SIN1; inhibiting H-Ras/HRAS activity. Post-translationally, palmitoylated by the ZDHHC9-GOLGA7 complex. A continuous cycle of de- and re-palmitoylation regulates rapid exchange between plasma membrane and Golgi. S-nitrosylated; critical for redox regulation. Important for stimulating guanine nucleotide exchange. No structural perturbation on nitrosylation. In terms of processing, the covalent modification of cysteine by 15-deoxy-Delta12,14-prostaglandin-J2 is autocatalytic and reversible. It may occur as an alternative to other cysteine modifications, such as S-nitrosylation and S-palmitoylation. Post-translationally, acetylation at Lys-104 prevents interaction with guanine nucleotide exchange factors (GEFs). Fatty-acylated at Lys-170. In terms of processing, ubiquitinated by the BCR(LZTR1) E3 ubiquitin ligase complex at Lys-170 in a non-degradative manner, leading to inhibit Ras signaling by decreasing Ras association with membranes. Post-translationally, (Microbial infection) Glucosylated at Thr-35 by P.sordellii toxin TcsL. Monoglucosylation completely prevents the recognition of the downstream effector, blocking the GTPases in their inactive form, leading to inhibit Ras signaling. In terms of tissue distribution, widely expressed.

Its subcellular location is the cell membrane. The protein resides in the golgi apparatus. It localises to the golgi apparatus membrane. It is found in the nucleus. The protein localises to the cytoplasm. Its subcellular location is the perinuclear region. It catalyses the reaction GTP + H2O = GDP + phosphate + H(+). Alternates between an inactive form bound to GDP and an active form bound to GTP. Activated by a guanine nucleotide-exchange factor (GEF) and inactivated by a GTPase-activating protein (GAP). Involved in the activation of Ras protein signal transduction. Ras proteins bind GDP/GTP and possess intrinsic GTPase activity. The sequence is that of GTPase HRas (HRAS) from Homo sapiens (Human).